Reading from the N-terminus, the 83-residue chain is Cytochrome b559 subunit alpha (83 aa).

Residues 21 to 35 form a helical membrane-spanning segment; that stretch reads VIHSITIPSLFIAGW. Histidine 23 contacts heme.

It belongs to the PsbE/PsbF family. As to quaternary structure, heterodimer of an alpha subunit and a beta subunit. PSII is composed of 1 copy each of membrane proteins PsbA, PsbB, PsbC, PsbD, PsbE, PsbF, PsbH, PsbI, PsbJ, PsbK, PsbL, PsbM, PsbT, PsbX, PsbY, PsbZ, Psb30/Ycf12, at least 3 peripheral proteins of the oxygen-evolving complex and a large number of cofactors. It forms dimeric complexes. Heme b serves as cofactor.

The protein localises to the plastid. The protein resides in the chloroplast thylakoid membrane. This b-type cytochrome is tightly associated with the reaction center of photosystem II (PSII). PSII is a light-driven water:plastoquinone oxidoreductase that uses light energy to abstract electrons from H(2)O, generating O(2) and a proton gradient subsequently used for ATP formation. It consists of a core antenna complex that captures photons, and an electron transfer chain that converts photonic excitation into a charge separation. This chain is Cytochrome b559 subunit alpha, found in Amborella trichopoda.